Consider the following 65-residue polypeptide: Subtilisin inhibitor CLSI-I (65 aa).

The protein belongs to the protease inhibitor I13 (potato type I serine protease inhibitor) family.

Functionally, inhibits subtilisin-type microbial serine proteases including proteinase K, subtilisin BPN', subtilisin Carlsberg, subtilisin E, A.oryzae protease and S.griseus alkaline protease. Weakly inhibits pronase E. Does not inhibit trypsin or chymotrypsin. The sequence is that of Subtilisin inhibitor CLSI-I from Canavalia lineata (Beach bean).